We begin with the raw amino-acid sequence, 111 residues long: Cytochrome c oxidase subunit 6A1, mitochondrial (111 aa).

The N-terminal 26 residues, 1–26 (MASAVLSASRVSGLLGRALPRVGRPM), are a transit peptide targeting the mitochondrion. The Mitochondrial matrix segment spans residues 27-36 (SSGAHGEEGS). Residues 37–61 (ARIWKALTYFVALPGVGVSMLNVFL) form a helical membrane-spanning segment. At 62-111 (KSRHEEHERPEFVAYPHLRIRTKPFPWGDGNHTLFHNPHMNPLPTGYEDE) the chain is on the mitochondrial intermembrane side.

This sequence belongs to the cytochrome c oxidase subunit 6A family. As to quaternary structure, component of the cytochrome c oxidase (complex IV, CIV), a multisubunit enzyme composed of 14 subunits. The complex is composed of a catalytic core of 3 subunits MT-CO1, MT-CO2 and MT-CO3, encoded in the mitochondrial DNA, and 11 supernumerary subunits COX4I, COX5A, COX5B, COX6A, COX6B, COX6C, COX7A, COX7B, COX7C, COX8 and NDUFA4, which are encoded in the nuclear genome. The complex exists as a monomer or a dimer and forms supercomplexes (SCs) in the inner mitochondrial membrane with NADH-ubiquinone oxidoreductase (complex I, CI) and ubiquinol-cytochrome c oxidoreductase (cytochrome b-c1 complex, complex III, CIII), resulting in different assemblies (supercomplex SCI(1)III(2)IV(1) and megacomplex MCI(2)III(2)IV(2)).

It localises to the mitochondrion inner membrane. It functions in the pathway energy metabolism; oxidative phosphorylation. In terms of biological role, component of the cytochrome c oxidase, the last enzyme in the mitochondrial electron transport chain which drives oxidative phosphorylation. The respiratory chain contains 3 multisubunit complexes succinate dehydrogenase (complex II, CII), ubiquinol-cytochrome c oxidoreductase (cytochrome b-c1 complex, complex III, CIII) and cytochrome c oxidase (complex IV, CIV), that cooperate to transfer electrons derived from NADH and succinate to molecular oxygen, creating an electrochemical gradient over the inner membrane that drives transmembrane transport and the ATP synthase. Cytochrome c oxidase is the component of the respiratory chain that catalyzes the reduction of oxygen to water. Electrons originating from reduced cytochrome c in the intermembrane space (IMS) are transferred via the dinuclear copper A center (CU(A)) of subunit 2 and heme A of subunit 1 to the active site in subunit 1, a binuclear center (BNC) formed by heme A3 and copper B (CU(B)). The BNC reduces molecular oxygen to 2 water molecules unsing 4 electrons from cytochrome c in the IMS and 4 protons from the mitochondrial matrix. This chain is Cytochrome c oxidase subunit 6A1, mitochondrial (Cox6a1), found in Rattus norvegicus (Rat).